The sequence spans 31 residues: Nemertide alpha-4 (31 aa).

3 cysteine pairs are disulfide-bonded: Cys-2-Cys-16, Cys-9-Cys-20, and Cys-15-Cys-26. A 4-hydroxyproline mark is found at Pro-28 and Pro-29.

This sequence belongs to the nemertide family. In terms of tissue distribution, confined to the epidermis and to the mucus layer.

The protein resides in the secreted. In terms of biological role, potent toxin, demonstrating strong inhibitory effects on insect sodium channels (Nav) and reduced activity on mammalian sodium channels. Potently inhibits inactivation of insect sodium channels of B.germanica (BgNav1) (EC(50)=11.1 nM). Also delays the inactivation of most mammalian Nav (human Nav1.1/SCN1A; EC(50)=92 nM, rat Nav1.2/SCN2A; EC(50)=134.2 nM, rat Nav1.3/SCN3A; EC(50)=12.9 nM, rat Nav1.4/SCN4A; EC(50)=14.6 nM, human Nav1.5/SCN5A; EC(50)=27.8 nM, mouse Nav1.6/SCN8A; EC(50)=123.6 nM, human Nav1.9/SCN9A; EC(50)=80.5 nM). Inactivation is completely prevented by a concentration of 1 uM, resulting in sustained, non-inactivating currents. In addition, the toxin significantly enhances the recovery from inactivation, and the open state is not required for the toxin to interact with the channel. In vivo, injection into brine shrimp (Artemia salina) stops movement or causes death after 24 hours (EC(50)=0.4 uM). The sequence is that of Nemertide alpha-4 from Lineus sanguineus (Ribbon worm).